A 164-amino-acid chain; its full sequence is Phosphopantetheine adenylyltransferase (164 aa).

Ser9 contacts substrate. ATP is bound by residues 9–10 and His17; that span reads SF. Positions 41, 73, and 87 each coordinate substrate. ATP is bound by residues 88-90, Glu98, and 123-129; these read GLR and YSYISSS.

It belongs to the bacterial CoaD family. Homohexamer. Mg(2+) serves as cofactor.

It is found in the cytoplasm. The enzyme catalyses (R)-4'-phosphopantetheine + ATP + H(+) = 3'-dephospho-CoA + diphosphate. It functions in the pathway cofactor biosynthesis; coenzyme A biosynthesis; CoA from (R)-pantothenate: step 4/5. Its function is as follows. Reversibly transfers an adenylyl group from ATP to 4'-phosphopantetheine, yielding dephospho-CoA (dPCoA) and pyrophosphate. The protein is Phosphopantetheine adenylyltransferase of Clostridium perfringens (strain SM101 / Type A).